The primary structure comprises 319 residues: Cobalamin biosynthesis protein CbiB (319 aa).

4 helical membrane passes run 56–76, 82–102, 153–173, and 296–316; these read VMWVVVVGVTWGVAWGVLALA, WFGWSVEVWMIFTTLAGRSLA, VDGIIAPLFFLFLGGAPLAMA, and LMWVASTLALALFIAARCGLS.

It belongs to the CobD/CbiB family.

It is found in the cell membrane. It functions in the pathway cofactor biosynthesis; adenosylcobalamin biosynthesis. Functionally, converts cobyric acid to cobinamide by the addition of aminopropanol on the F carboxylic group. However, the true cosubstrate could be (R)-1-amino-2-propanol O-2-phosphate, leading to cobinamide phosphate. The sequence is that of Cobalamin biosynthesis protein CbiB from Salmonella paratyphi A (strain ATCC 9150 / SARB42).